Here is a 409-residue protein sequence, read N- to C-terminus: N-carbamoyl-L-amino acid amidohydrolase (409 aa).

Residues His79, Asp90, Glu125, and His189 each coordinate a divalent metal cation. Gln192, His225, Asn273, Arg286, and Ala355 together coordinate an N-carbamoyl-L-alpha-amino acid. Residues Gly208 to Pro325 form an involved in dimerization region. His380 is an a divalent metal cation binding site.

It belongs to the peptidase M20 family. As to quaternary structure, homodimer. Mn(2+) serves as cofactor. Ni(2+) is required as a cofactor. It depends on Co(2+) as a cofactor. The cofactor is Fe(2+).

It carries out the reaction an N-carbamoyl-L-alpha-amino acid + H2O + 2 H(+) = an L-alpha-amino acid + NH4(+) + CO2. It catalyses the reaction N-carbamoyl-L-methionine + H2O + 2 H(+) = L-methionine + NH4(+) + CO2. The catalysed reaction is N-acetyl-L-methionine + H2O = L-methionine + acetate. The enzyme catalyses N-carbamoyl-L-alanine + H2O + 2 H(+) = L-alanine + NH4(+) + CO2. It carries out the reaction N-carbamoyl-L-glutamate + H2O + 2 H(+) = L-glutamate + NH4(+) + CO2. It catalyses the reaction N-carbamoylglycine + H2O + 2 H(+) = glycine + NH4(+) + CO2. The catalysed reaction is N-carbamoyl-L-leucine + H2O + 2 H(+) = L-leucine + NH4(+) + CO2. Functionally, catalyzes the hydrolysis of aliphatic N-carbamoyl-L-alpha-amino acids to free L-alpha-amino acids. Is strictly L-specific since it is inactive toward N-carbamoyl-D-alpha-amino acids. Is not able to use aromatic N-carbamoyl-L-alpha-amino acids like N-carbamoyl-L-tryptophan and N-carbamoyl-L-phenylalanine as substrates, but is also able to hydrolyze N-acetyl-L-methionine. The sequence is that of N-carbamoyl-L-amino acid amidohydrolase from Geobacillus stearothermophilus (Bacillus stearothermophilus).